Reading from the N-terminus, the 647-residue chain is DNA mismatch repair protein MutL (647 aa).

Residues 375–433 are disordered; it reads KQEEPQAVKQPTQLWQPPKQEWQPPQSLVREEQSWQPSTKPIIEEPIQEEKSWDSNEEG. Residues 387–400 are compositionally biased toward low complexity; the sequence is QLWQPPKQEWQPPQ.

This sequence belongs to the DNA mismatch repair MutL/HexB family.

Its function is as follows. This protein is involved in the repair of mismatches in DNA. It is required for dam-dependent methyl-directed DNA mismatch repair. May act as a 'molecular matchmaker', a protein that promotes the formation of a stable complex between two or more DNA-binding proteins in an ATP-dependent manner without itself being part of a final effector complex. The protein is DNA mismatch repair protein MutL of Bacillus cereus (strain AH820).